A 77-amino-acid polypeptide reads, in one-letter code: Large ribosomal subunit protein bL28 (77 aa).

Belongs to the bacterial ribosomal protein bL28 family.

This chain is Large ribosomal subunit protein bL28, found in Polaromonas naphthalenivorans (strain CJ2).